We begin with the raw amino-acid sequence, 124 residues long: Glycine cleavage system H protein (124 aa).

Residues 19 to 101 form the Lipoyl-binding domain; it reads VATVGITDHA…ESGAWFFRMT (83 aa). The residue at position 60 (Lys-60) is an N6-lipoyllysine.

Belongs to the GcvH family. As to quaternary structure, the glycine cleavage system is composed of four proteins: P, T, L and H. The cofactor is (R)-lipoate.

Its function is as follows. The glycine cleavage system catalyzes the degradation of glycine. The H protein shuttles the methylamine group of glycine from the P protein to the T protein. The polypeptide is Glycine cleavage system H protein (Acidiphilium cryptum (strain JF-5)).